The sequence spans 198 residues: Protein FAM219B (198 aa).

Disordered regions lie at residues 1–58 (MATA…KRGP) and 83–146 (RRKG…EQVN). Phosphoserine is present on residues S14, S91, S125, and S127. Over residues 134 to 146 (RYSSGYSSAEQVN) the composition is skewed to polar residues.

It belongs to the FAM219 family.

The sequence is that of Protein FAM219B (FAM219B) from Homo sapiens (Human).